Here is a 65-residue protein sequence, read N- to C-terminus: Large ribosomal subunit protein bL35 (65 aa).

The protein belongs to the bacterial ribosomal protein bL35 family.

The protein is Large ribosomal subunit protein bL35 of Nostoc sp. (strain PCC 7120 / SAG 25.82 / UTEX 2576).